The following is a 37-amino-acid chain: Large ribosomal subunit protein bL36 (37 aa).

Belongs to the bacterial ribosomal protein bL36 family.

The sequence is that of Large ribosomal subunit protein bL36 from Cyanothece sp. (strain PCC 7425 / ATCC 29141).